The primary structure comprises 690 residues: Protease 2 (690 aa).

Catalysis depends on charge relay system residues serine 534, aspartate 619, and histidine 654.

This sequence belongs to the peptidase S9A family.

It catalyses the reaction Hydrolysis of -Arg-|-Xaa- and -Lys-|-Xaa- bonds in oligopeptides, even when P1' residue is proline.. Cleaves peptide bonds on the C-terminal side of lysyl and argininyl residues. This chain is Protease 2 (ptrB), found in Moraxella lacunata.